Reading from the N-terminus, the 75-residue chain is Small integral membrane protein 7 (75 aa).

An N-terminal signal peptide occupies residues M1–A17. At V18–Y53 the chain is on the extracellular side. A helical transmembrane segment spans residues F54–G74. A topological domain (cytoplasmic) is located at residue S75.

The protein belongs to the SMIM7 family.

It localises to the membrane. The protein is Small integral membrane protein 7 (SMIM7) of Homo sapiens (Human).